The chain runs to 187 residues: V-type ATP synthase subunit E (187 aa).

This sequence belongs to the V-ATPase E subunit family.

In terms of biological role, produces ATP from ADP in the presence of a proton gradient across the membrane. The polypeptide is V-type ATP synthase subunit E (Clostridioides difficile (strain 630) (Peptoclostridium difficile)).